Reading from the N-terminus, the 223-residue chain is MALVRGGWLWRQSSILRRWKRNWFALWLDGTLGYYHDETAQDEEDRVVIHFNVRDIKVGQECQDVQPPEGRSRDGLLTVNLREGSRLHLCAETRDDAIAWKTALMEANSTPAPAGATVPPRSRRVCPKVRCTSLSWKPCKVERRIWVRVYSPYQDYYEVVPPNAHEATYVRSYYGPPYGPGVTHVIVREDPCYSSGAPLAMGMLAGAATGAALGSLMWSPCWF.

The PH domain occupies 2 to 109; the sequence is ALVRGGWLWR…WKTALMEANS (108 aa).

Homodimer. Interacts (via PH domain) with MYO1C. Interacts (via PH domain) with MYO7A. Binds transducins. Highly expressed in photoreceptor cells, oligodendrocytes and throughout the myelinated parts of the central nervous system. Detected in brain, liver, kidney, spleen and trachea.

It localises to the membrane. It is found in the cytoplasm. In Rattus norvegicus (Rat), this protein is Pleckstrin homology domain-containing family B member 1 (Plekhb1).